Reading from the N-terminus, the 111-residue chain is Cornifelin homolog B (111 aa).

The protein belongs to the cornifelin family.

The chain is Cornifelin homolog B (cnfn-b) from Xenopus laevis (African clawed frog).